We begin with the raw amino-acid sequence, 1390 residues long: MEAKNLTARQVLGFQKTIGFDEVRISIASPETIESWSKGEVRNPETINYRTFKPEKGGLFCERIFGPTKDWECACGKYKRIKYKGVICDRCGVEVTLSRVRRERMGHIKLAVPVSHIWFLKCMPSRLGLIMDMTAKDLERVIYYEDYLVVDPGKTPLRFKQLLSEQEYRDALAQYGEEAFVAKMGAEAVRDILKQIDLQALANDLTAAMEGTRSKQLKKKLAKRLKLVQGLINSETRPEWMILEVLPVIPPDLRPLVPLEGGRFATSDLNDLYRRVINRNNRLKNLLQLKTPDVIIRNEKRMLQEAVDALLDNGRHGRAVTGAGNRPLKSLSDMLQGKTGRFRMNLLGKRVDYSGRSVIVIGPELKLHQCGLPKKMALVLFEPFMIRRLRELGHVHTVRTAKKMIEKQDPLVWDVLEQVTAGHLVLLNRAPTLHRLSIQAFEPILIEGDAIRIHPLVCTAYNADFDGDQMAVHVPLSIEAQLEARLLMLAPLNIFSPSSGKPITTPTQDITLGCYYLTQPPLKIKVQEQKRKPLFSDAQEVIFAYNDGLLQMHDLILLKNPDYGRSTVFGDKNKKVIETTPGRVIFNQIWPPELGFYNKPAGKKQLGEIILKCYQTVGREKTVQCLDNLKELGFAEATKAGISIGIDDMIVPAEKTRIISKAYEMVNVVERQYRSGAITDGERYNKIVDIWTQATEEISGVIYKSLENNLGRPEYNPLFLMVDSGARGNRQQVRQLAGIRGLMAKPSGEIIERPIISNFREGLSVLEYFISTHGARKGLADTALKTADAGYLTRKLHDVAQDVVITMQDCGTNKGIIVQAIYEGDEEIVKLSERIYGRVCCDEIIDPMTGRIVVRPGELIDEKKAKEIEEAGAEKVKIRSVLTCESKWGVCASCYGLNLATNRMARLGESVGVIAAQSIGEPGTQLTMRTFHIGGTASQVFKQPQIRARNDGIVQYIDLRTVKTVDNHFIVLSKSGYLAVLDPSGRELERHTVIVGSIILIPDGEMVKKGQVFVQWDPYNVPILTEKGGIVEFRDIIEGVTVKKELDETTKQISTIVIEHKHDLHPQILILDENTREVIAFYGIPAGARIEVKPGDKVVAGQRIARTPRKMVQTKDITGGLPRVAELFEARKPKDSAEIAKIDGIVEDGGIIRGKRRILIRDPQTGSEEEHLIPLSKHLIVYKGDVVKKGQQLTEGPIVPQEILDVCGIQELQEYLLNEVQEVYRLQGVEINDKHIEIIIKQMLKKVKILDAGDTSFLWEEQVDRLKFEEENRIIEAKGGKPAVGIPVLLGITKASLDTDSFIAAASFQDTTRVLTEAATLGKVDPLKGFKENIIMGNLIPSGTGFRTYRNIRLVEVAPPEFKEEKKEQKIYGNGEEPAKEQKWIPQAGT.

Residues Cys73, Cys75, Cys88, and Cys91 each coordinate Zn(2+). Residues Asp464, Asp466, and Asp468 each coordinate Mg(2+). 4 residues coordinate Zn(2+): Cys810, Cys884, Cys891, and Cys894. The interval 1365–1390 (EKKEQKIYGNGEEPAKEQKWIPQAGT) is disordered.

It belongs to the RNA polymerase beta' chain family. The RNAP catalytic core consists of 2 alpha, 1 beta, 1 beta' and 1 omega subunit. When a sigma factor is associated with the core the holoenzyme is formed, which can initiate transcription. Mg(2+) is required as a cofactor. Zn(2+) serves as cofactor.

It catalyses the reaction RNA(n) + a ribonucleoside 5'-triphosphate = RNA(n+1) + diphosphate. DNA-dependent RNA polymerase catalyzes the transcription of DNA into RNA using the four ribonucleoside triphosphates as substrates. The sequence is that of DNA-directed RNA polymerase subunit beta' from Methylacidiphilum infernorum (isolate V4) (Methylokorus infernorum (strain V4)).